Reading from the N-terminus, the 266-residue chain is Mitochondrial import inner membrane translocase subunit Tim29 (266 aa).

The N-terminal 37 residues, 1–37 (MVTAALKRFWSGGHGEAGGEAGGATTVAVKPGLWTRL), are a transit peptide targeting the mitochondrion. At 38 to 65 (STWAGALLRDYAEACGDAAAAARARPGR) the chain is on the mitochondrial matrix side. The chain crosses the membrane as a helical span at residues 66 to 83 (AALYVGLLGGAAACCALA). The Mitochondrial intermembrane segment spans residues 84–266 (PSEAAFEEAL…DSLVQSDVSR (183 aa)).

In terms of assembly, component of the TIM22 complex, which core is composed of TIMM22, associated with TIMM10 (TIMM10A and/or TIMM10B), TIMM9, AGK and TIMM29. Interacts with TIMM10B; the interaction is direct. Interacts with TOMM40; linking the TIM22 complex to the TOM complex. Interacts with TIMM22 (when oxidized); the interaction is direct.

The protein localises to the mitochondrion inner membrane. Component of the TIM22 complex, a complex that mediates the import and insertion of multi-pass transmembrane proteins into the mitochondrial inner membrane. The TIM22 complex forms a twin-pore translocase that uses the membrane potential as the external driving force. Required for the stability of the TIM22 complex and functions in the assembly of the TIMM22 protein into the TIM22 complex. May facilitate cooperation between TIM22 and TOM complexes by interacting with TOMM40. The polypeptide is Mitochondrial import inner membrane translocase subunit Tim29 (Timm29) (Mus musculus (Mouse)).